Reading from the N-terminus, the 263-residue chain is Glucosamine-6-phosphate deaminase (263 aa).

Asp67 serves as the catalytic Proton acceptor; for enolization step. Asn136 (for ring-opening step) is an active-site residue. The active-site Proton acceptor; for ring-opening step is the His138. The active-site For ring-opening step is Glu143.

Belongs to the glucosamine/galactosamine-6-phosphate isomerase family. NagB subfamily. In terms of assembly, homohexamer.

It catalyses the reaction alpha-D-glucosamine 6-phosphate + H2O = beta-D-fructose 6-phosphate + NH4(+). The protein operates within amino-sugar metabolism; N-acetylneuraminate degradation; D-fructose 6-phosphate from N-acetylneuraminate: step 5/5. Functionally, catalyzes the reversible isomerization-deamination of glucosamine 6-phosphate (GlcN6P) to form fructose 6-phosphate (Fru6P) and ammonium ion. The polypeptide is Glucosamine-6-phosphate deaminase (Cellvibrio japonicus (strain Ueda107) (Pseudomonas fluorescens subsp. cellulosa)).